The sequence spans 64 residues: Alpha-like toxin BmK M2 (64 aa).

Positions 2-64 constitute an LCN-type CS-alpha/beta domain; it reads RDAYIAKPHN…VPIRVPGKCH (63 aa). Intrachain disulfides connect C12/C63, C16/C36, C22/C46, and C26/C48.

Belongs to the long (4 C-C) scorpion toxin superfamily. Sodium channel inhibitor family. Alpha subfamily. In terms of tissue distribution, expressed by the venom gland.

Its subcellular location is the secreted. Its function is as follows. Alpha toxins bind voltage-independently at site-3 of sodium channels (Nav) and inhibit the inactivation of the activated channels, thereby blocking neuronal transmission. This toxin is active against both mammals and insects, and is classified as an alpha-like toxin. The sequence is that of Alpha-like toxin BmK M2 from Olivierus martensii (Manchurian scorpion).